The primary structure comprises 335 residues: Olfactory receptor 9K2 (335 aa).

Residues 1 to 50 (MLGSKPRVHLYILPCASQQVSTMGDRGTSNHSEMTDFILAGFRVRPELHI) lie on the Extracellular side of the membrane. Residue asparagine 30 is glycosylated (N-linked (GlcNAc...) asparagine). Residues 51-71 (LLFLLFLFVYAMILLGNVGMM) traverse the membrane as a helical segment. Residues 72-79 (TIIMTDPR) lie on the Cytoplasmic side of the membrane. A helical membrane pass occupies residues 80-100 (LNTPMYFFLGNLSFIDLFYSS). Residues 101–124 (VIEPKAMINFWSENKSISFAGCVA) are Extracellular-facing. Asparagine 114 is a glycosylation site (N-linked (GlcNAc...) asparagine). Residues cysteine 122 and cysteine 214 are joined by a disulfide bond. Residues 125–145 (QLFLFALLIVTEGFLLAAMAY) traverse the membrane as a helical segment. Over 146-164 (DRFIAICNPLLYSVQMSTR) the chain is Cytoplasmic. Residues 165-185 (LCTQLVAGSYFCGCISSVIQT) form a helical membrane-spanning segment. Residues 186-222 (SMTFTLSFCASRAVDHFYCDSRPLQRLSCSDLFIHRM) lie on the Extracellular side of the membrane. A helical membrane pass occupies residues 223-242 (ISFSLSCIIILPTIIVIIVS). At 243–262 (YMYIVSTVLKIHSTEGHKKA) the chain is on the cytoplasmic side. Residues 263–283 (FSTCSSHLGVVSVLYGAVFFM) traverse the membrane as a helical segment. Topologically, residues 284 to 296 (YLTPDRFPELSKV) are extracellular. Topologically, residues 316-335 (RNKDVQEALKKFLEKKNIIL) are cytoplasmic.

Belongs to the G-protein coupled receptor 1 family.

It localises to the cell membrane. In terms of biological role, odorant receptor. In Homo sapiens (Human), this protein is Olfactory receptor 9K2 (OR9K2).